The following is a 371-amino-acid chain: uncharacterized protein (371 aa).

This is an uncharacterized protein from Clostridium acetobutylicum (strain ATCC 824 / DSM 792 / JCM 1419 / IAM 19013 / LMG 5710 / NBRC 13948 / NRRL B-527 / VKM B-1787 / 2291 / W).